The primary structure comprises 255 residues: Diphthine synthase (255 aa).

S-adenosyl-L-methionine-binding positions include Leu-9, Asp-85, Val-88, 113 to 114 (SI), Leu-164, Ala-207, and His-232.

It belongs to the diphthine synthase family. Homodimer.

It carries out the reaction 2-[(3S)-amino-3-carboxypropyl]-L-histidyl-[translation elongation factor 2] + 3 S-adenosyl-L-methionine = diphthine-[translation elongation factor 2] + 3 S-adenosyl-L-homocysteine + 3 H(+). Its pathway is protein modification; peptidyl-diphthamide biosynthesis. Functionally, S-adenosyl-L-methionine-dependent methyltransferase that catalyzes the trimethylation of the amino group of the modified target histidine residue in translation elongation factor 2 (EF-2), to form an intermediate called diphthine. The three successive methylation reactions represent the second step of diphthamide biosynthesis. This Methanococcus maripaludis (strain DSM 14266 / JCM 13030 / NBRC 101832 / S2 / LL) protein is Diphthine synthase.